A 925-amino-acid chain; its full sequence is Isoleucine--tRNA ligase (925 aa).

The 'HIGH' region signature appears at 57–67 (PYANGDIHIGH). Position 553 (E553) interacts with L-isoleucyl-5'-AMP. A 'KMSKS' region motif is present at residues 594 to 598 (KMSKS). K597 contributes to the ATP binding site. 4 residues coordinate Zn(2+): C889, C892, C909, and C912.

Belongs to the class-I aminoacyl-tRNA synthetase family. IleS type 1 subfamily. In terms of assembly, monomer. It depends on Zn(2+) as a cofactor.

It localises to the cytoplasm. It carries out the reaction tRNA(Ile) + L-isoleucine + ATP = L-isoleucyl-tRNA(Ile) + AMP + diphosphate. In terms of biological role, catalyzes the attachment of isoleucine to tRNA(Ile). As IleRS can inadvertently accommodate and process structurally similar amino acids such as valine, to avoid such errors it has two additional distinct tRNA(Ile)-dependent editing activities. One activity is designated as 'pretransfer' editing and involves the hydrolysis of activated Val-AMP. The other activity is designated 'posttransfer' editing and involves deacylation of mischarged Val-tRNA(Ile). The sequence is that of Isoleucine--tRNA ligase from Brevibacillus brevis (strain 47 / JCM 6285 / NBRC 100599).